Reading from the N-terminus, the 968-residue chain is AP2-associated protein kinase 1 (968 aa).

N-acetylmethionine is present on Met1. Over residues 1-11 (MKKFFDSRREQ) the composition is skewed to basic and acidic residues. Residues 1–25 (MKKFFDSRREQGGSGLGSGSSGGGG) are disordered. Over residues 12 to 25 (GGSGLGSGSSGGGG) the composition is skewed to gly residues. The residue at position 14 (Ser14) is a Phosphoserine. The Protein kinase domain maps to 46–315 (VTVDEVLAEG…QVSFFSFKLL (270 aa)). Residues 52–60 (LAEGGFAIV) and Lys74 each bind ATP. Catalysis depends on Asp176, which acts as the Proton acceptor. Tyr234 is modified (phosphotyrosine). Phosphoserine is present on Ser235. Disordered stretches follow at residues 327–485 (SPIP…AQAP) and 578–640 (IQPP…AGHR). 2 positions are modified to phosphothreonine: Thr354 and Thr389. Arg391 is modified (omega-N-methylarginine). Residues 437–448 (QAPPAPQQPPSA) are compositionally biased toward pro residues. Composition is skewed to low complexity over residues 449-472 (PAQG…LKQQ) and 578-589 (IQPPQAQPATAS). At Thr613 the chain carries Phosphothreonine. A Phosphoserine modification is found at Ser625. Thr627 is modified (phosphothreonine). Ser630, Ser631, Ser644, and Ser657 each carry phosphoserine. Thr660 carries the post-translational modification Phosphothreonine. Residues 671–708 (SLNKSKSATTTPSGSPRASQQNVYNPSEGSTWNPFDDD) form a disordered region. Residues 679-703 (TTTPSGSPRASQQNVYNPSEGSTWN) are compositionally biased toward polar residues. Tyr694 is subject to Phosphotyrosine. Ser738, Ser853, Ser944, and Ser945 each carry phosphoserine. A clathrin-binding domain (CBD) region spans residues 830-967 (EKADVAVESL…SLLLVDQLID (138 aa)). 2 disordered regions span residues 843-862 (LEPP…ASNR) and 929-952 (PVLI…ESSL). The segment covering 851-862 (LPSQTESVASNR) has biased composition (polar residues). Residues 938–951 (GGHSRNSSGSSESS) are compositionally biased toward low complexity.

It belongs to the protein kinase superfamily. Ser/Thr protein kinase family. In terms of assembly, interacts (via CBD domain) with clathrin. Interacts with AP-2 complex. Interacts with NUMB. Interacts with alpha-adaptin. Interacts with EPS15. Interacts with membrane-bound activated NOTCH1 but not with the inactive full-length form of NOTCH1. Preferentially interacts with monoubiquitinated activated NOTCH1 compared to the non-ubiquitinated form. Post-translationally, autophosphorylated.

The protein localises to the cell membrane. It is found in the membrane. It localises to the clathrin-coated pit. Its subcellular location is the presynapse. It carries out the reaction L-seryl-[protein] + ATP = O-phospho-L-seryl-[protein] + ADP + H(+). It catalyses the reaction L-threonyl-[protein] + ATP = O-phospho-L-threonyl-[protein] + ADP + H(+). Stimulated by clathrin. Its function is as follows. Regulates clathrin-mediated endocytosis by phosphorylating the AP2M1/mu2 subunit of the adaptor protein complex 2 (AP-2) which ensures high affinity binding of AP-2 to cargo membrane proteins during the initial stages of endocytosis. Preferentially, may phosphorylate substrates on threonine residues. Regulates phosphorylation of other AP-2 subunits as well as AP-2 localization and AP-2-mediated internalization of ligand complexes. Phosphorylates NUMB and regulates its cellular localization, promoting NUMB localization to endosomes. Binds to and stabilizes the activated form of NOTCH1, increases its localization in endosomes and regulates its transcriptional activity. This Sus scrofa (Pig) protein is AP2-associated protein kinase 1 (AAK1).